The sequence spans 122 residues: uncharacterized protein (122 aa).

Positions 97–122 (TSRNGFSNPNKDGKKNDDDNNSSSKS) are disordered.

This is an uncharacterized protein from Mycoplasma genitalium (strain ATCC 33530 / DSM 19775 / NCTC 10195 / G37) (Mycoplasmoides genitalium).